The following is a 113-amino-acid chain: Small ribosomal subunit protein bS6 (113 aa).

It belongs to the bacterial ribosomal protein bS6 family.

Binds together with bS18 to 16S ribosomal RNA. The protein is Small ribosomal subunit protein bS6 of Wigglesworthia glossinidia brevipalpis.